The primary structure comprises 132 residues: ATP synthase epsilon chain, chloroplastic (132 aa).

Belongs to the ATPase epsilon chain family. As to quaternary structure, F-type ATPases have 2 components, CF(1) - the catalytic core - and CF(0) - the membrane proton channel. CF(1) has five subunits: alpha(3), beta(3), gamma(1), delta(1), epsilon(1). CF(0) has three main subunits: a, b and c.

The protein localises to the plastid. Its subcellular location is the chloroplast thylakoid membrane. Produces ATP from ADP in the presence of a proton gradient across the membrane. The sequence is that of ATP synthase epsilon chain, chloroplastic from Adiantum capillus-veneris (Maidenhair fern).